We begin with the raw amino-acid sequence, 272 residues long: Putative phosphoenolpyruvate synthase regulatory protein (272 aa).

Residue Gly152–Thr159 participates in ADP binding.

This sequence belongs to the pyruvate, phosphate/water dikinase regulatory protein family. PSRP subfamily.

The enzyme catalyses [pyruvate, water dikinase] + ADP = [pyruvate, water dikinase]-phosphate + AMP + H(+). It catalyses the reaction [pyruvate, water dikinase]-phosphate + phosphate + H(+) = [pyruvate, water dikinase] + diphosphate. Bifunctional serine/threonine kinase and phosphorylase involved in the regulation of the phosphoenolpyruvate synthase (PEPS) by catalyzing its phosphorylation/dephosphorylation. The protein is Putative phosphoenolpyruvate synthase regulatory protein of Pseudomonas fluorescens (strain SBW25).